The chain runs to 254 residues: Probable glucose-1-phosphate cytidylyltransferase (254 aa).

Residues 6 to 10, 11 to 13, Lys-23, Thr-103, Arg-108, and Gly-126 contribute to the substrate site; these read LCGGK and GTR. 2 residues coordinate Mg(2+): Asp-127 and Asp-232.

It belongs to the glucose-1-phosphate cytidylyltransferase family. Mg(2+) serves as cofactor.

It catalyses the reaction alpha-D-glucose 1-phosphate + CTP + H(+) = CDP-D-glucose + diphosphate. Its function is as follows. Catalyzes the transfer of a CMP moiety from CTP to glucose 1-phosphate. This chain is Probable glucose-1-phosphate cytidylyltransferase (yfnH), found in Bacillus subtilis (strain 168).